The sequence spans 178 residues: MTQLSSSDVPGMGRRQFMNLLTFGSVTGVALGALYPVVNYFIPPRAAGAGGGTTAKDELGNAITATGWLSSHPEGDRSLVQGLKGDPTYLIVEGPDAIGSYGINAICTHLGCVVPWNSGANKFMCPCHGSQYDATGKVVRGPAPLSLALANVSVENDNVFVSQWTETDFRTGDKPWWA.

The helical transmembrane segment at 20 to 42 (LLTFGSVTGVALGALYPVVNYFI) threads the bilayer. The Rieske domain occupies 65–161 (ATGWLSSHPE…VSVENDNVFV (97 aa)). Positions 107, 109, 125, and 128 each coordinate [2Fe-2S] cluster. Cys-112 and Cys-127 are joined by a disulfide.

Belongs to the Rieske iron-sulfur protein family. The 4 large subunits of the cytochrome b6-f complex are cytochrome b6, subunit IV (17 kDa polypeptide, PetD), cytochrome f and the Rieske protein, while the 4 small subunits are PetG, PetL, PetM and PetN. The complex functions as a dimer. [2Fe-2S] cluster is required as a cofactor.

It localises to the cellular thylakoid membrane. It catalyses the reaction 2 oxidized [plastocyanin] + a plastoquinol + 2 H(+)(in) = 2 reduced [plastocyanin] + a plastoquinone + 4 H(+)(out). Functionally, component of the cytochrome b6-f complex, which mediates electron transfer between photosystem II (PSII) and photosystem I (PSI), cyclic electron flow around PSI, and state transitions. The polypeptide is Cytochrome b6-f complex iron-sulfur subunit (Parasynechococcus marenigrum (strain WH8102)).